The primary structure comprises 498 residues: ATP synthase subunit beta, chloroplastic (498 aa).

ATP is bound at residue 172-179 (GGAGVGKT).

It belongs to the ATPase alpha/beta chains family. In terms of assembly, F-type ATPases have 2 components, CF(1) - the catalytic core - and CF(0) - the membrane proton channel. CF(1) has five subunits: alpha(3), beta(3), gamma(1), delta(1), epsilon(1). CF(0) has four main subunits: a(1), b(1), b'(1) and c(9-12).

The protein resides in the plastid. It localises to the chloroplast thylakoid membrane. The catalysed reaction is ATP + H2O + 4 H(+)(in) = ADP + phosphate + 5 H(+)(out). Functionally, produces ATP from ADP in the presence of a proton gradient across the membrane. The catalytic sites are hosted primarily by the beta subunits. This chain is ATP synthase subunit beta, chloroplastic, found in Coffea arabica (Arabian coffee).